We begin with the raw amino-acid sequence, 213 residues long: Phosphatidylserine decarboxylase proenzyme (213 aa).

S183 serves as the catalytic Schiff-base intermediate with substrate; via pyruvic acid. S183 is modified (pyruvic acid (Ser); by autocatalysis).

Belongs to the phosphatidylserine decarboxylase family. PSD-A subfamily. In terms of assembly, heterodimer of a large membrane-associated beta subunit and a small pyruvoyl-containing alpha subunit. Pyruvate serves as cofactor. In terms of processing, is synthesized initially as an inactive proenzyme. Formation of the active enzyme involves a self-maturation process in which the active site pyruvoyl group is generated from an internal serine residue via an autocatalytic post-translational modification. Two non-identical subunits are generated from the proenzyme in this reaction, and the pyruvate is formed at the N-terminus of the alpha chain, which is derived from the carboxyl end of the proenzyme. The post-translation cleavage follows an unusual pathway, termed non-hydrolytic serinolysis, in which the side chain hydroxyl group of the serine supplies its oxygen atom to form the C-terminus of the beta chain, while the remainder of the serine residue undergoes an oxidative deamination to produce ammonia and the pyruvoyl prosthetic group on the alpha chain.

It localises to the cell membrane. It catalyses the reaction a 1,2-diacyl-sn-glycero-3-phospho-L-serine + H(+) = a 1,2-diacyl-sn-glycero-3-phosphoethanolamine + CO2. It functions in the pathway phospholipid metabolism; phosphatidylethanolamine biosynthesis; phosphatidylethanolamine from CDP-diacylglycerol: step 2/2. In terms of biological role, catalyzes the formation of phosphatidylethanolamine (PtdEtn) from phosphatidylserine (PtdSer). This Syntrophus aciditrophicus (strain SB) protein is Phosphatidylserine decarboxylase proenzyme.